Here is a 168-residue protein sequence, read N- to C-terminus: MLTKGSKVVNVGIADMQGAQSPEILRTTLGSCIGVVFYAPDKKIGAMAHFMLSKDPSGKDSQKNPFKYAETAIPLLIKKMNEMGCNPGEYSVRLFGGASMFKGVQSSFLQNIGEQNILTARAILEQSKIPLILEDVGGNDGRTISLYLDDGRVLLKKGGFEKYLYKVR.

This sequence belongs to the CheD family.

It carries out the reaction L-glutaminyl-[protein] + H2O = L-glutamyl-[protein] + NH4(+). Probably deamidates glutamine residues to glutamate on methyl-accepting chemotaxis receptors (MCPs), playing an important role in chemotaxis. This chain is Probable chemoreceptor glutamine deamidase CheD 2, found in Leptospira interrogans serogroup Icterohaemorrhagiae serovar copenhageni (strain Fiocruz L1-130).